The following is a 143-amino-acid chain: Nucleoside diphosphate kinase (143 aa).

Residues lysine 11, phenylalanine 59, arginine 87, threonine 93, arginine 104, and asparagine 114 each coordinate ATP. Histidine 117 acts as the Pros-phosphohistidine intermediate in catalysis.

The protein belongs to the NDK family. As to quaternary structure, homotetramer. Requires Mg(2+) as cofactor.

The protein localises to the cytoplasm. It catalyses the reaction a 2'-deoxyribonucleoside 5'-diphosphate + ATP = a 2'-deoxyribonucleoside 5'-triphosphate + ADP. It carries out the reaction a ribonucleoside 5'-diphosphate + ATP = a ribonucleoside 5'-triphosphate + ADP. In terms of biological role, major role in the synthesis of nucleoside triphosphates other than ATP. The ATP gamma phosphate is transferred to the NDP beta phosphate via a ping-pong mechanism, using a phosphorylated active-site intermediate. This chain is Nucleoside diphosphate kinase, found in Nitrosococcus oceani (strain ATCC 19707 / BCRC 17464 / JCM 30415 / NCIMB 11848 / C-107).